We begin with the raw amino-acid sequence, 590 residues long: Sulfoacetaldehyde acetyltransferase (590 aa).

The protein belongs to the TPP enzyme family. Mg(2+) serves as cofactor. The cofactor is thiamine diphosphate.

The protein resides in the cytoplasm. The enzyme catalyses acetyl phosphate + sulfite + H(+) = sulfoacetaldehyde + phosphate. Its pathway is organosulfur degradation; taurine degradation via aerobic pathway; acetyl phosphate and sulfite from taurine: step 2/2. The protein is Sulfoacetaldehyde acetyltransferase of Rhodobacter capsulatus (strain ATCC BAA-309 / NBRC 16581 / SB1003).